Consider the following 405-residue polypeptide: MKILVLNAGSSTQKSCLYDLTGDTLPQAPPKPIWKGDIDWTIATDHGLLEIKANGVEKKLNLSADDHLKGMSQMLDSLVQGETKVIDDLSEIEIVGHRVVHGGLNYTQATLITQEVKQTIADLIPLAPTHNPAHLEGIETVEKLLGNVPQLAVFDTAFHSTLPLEVAAYPLPYEWLEKGLRRYGFHGISHQYCVHRAAELLGKPLNSLKLINCHLGNGCSLAAVKDGISINTTMGFTPLEGLMMGSRSGSIDPEIPIFLIRDHGFTPEDVITVLNKKSGLKGVSGVSSDLRAIQKAIQEGNEKAQLAFKMYIHRLRFYIGAMLASLGGLDALIFTAGVGENSSEVREQACEAFGFLGLKLDQAKNESRPVDEDIATPDSKVRVLVIHTEEDWAIAKECWHQLTQK.

Asn7 contributes to the Mg(2+) binding site. Residue Lys14 coordinates ATP. Position 98 (Arg98) interacts with substrate. Asp155 functions as the Proton donor/acceptor in the catalytic mechanism. Residues 214-218, 289-291, and 337-341 contribute to the ATP site; these read HLGNG, DLR, and GVGEN. Glu390 contributes to the Mg(2+) binding site.

It belongs to the acetokinase family. As to quaternary structure, homodimer. Requires Mg(2+) as cofactor. The cofactor is Mn(2+).

Its subcellular location is the cytoplasm. The catalysed reaction is acetate + ATP = acetyl phosphate + ADP. Its pathway is metabolic intermediate biosynthesis; acetyl-CoA biosynthesis; acetyl-CoA from acetate: step 1/2. Catalyzes the formation of acetyl phosphate from acetate and ATP. Can also catalyze the reverse reaction. The sequence is that of Acetate kinase from Gloeothece citriformis (strain PCC 7424) (Cyanothece sp. (strain PCC 7424)).